Here is a 168-residue protein sequence, read N- to C-terminus: RNA annealing protein YRA2 (168 aa).

Residues 40–114 form the RRM domain; that stretch reads FRLKITNIGL…KSIQVTLLDQ (75 aa). The interval 113-152 is disordered; the sequence is DQQKRKRDADQERRKLRHGPRGGYGSHYTKSQKPIEQRNK.

Belongs to the YRA1 family. Associates with mRNPs.

It localises to the nucleus. In terms of biological role, involved in export of poly(A) mRNAs from the nucleus. Recruited to the coding sequences as well as poly-A sites of active genes. This is RNA annealing protein YRA2 (YRA2) from Candida glabrata (strain ATCC 2001 / BCRC 20586 / JCM 3761 / NBRC 0622 / NRRL Y-65 / CBS 138) (Yeast).